Here is a 150-residue protein sequence, read N- to C-terminus: Large ribosomal subunit protein bL9 (150 aa).

Belongs to the bacterial ribosomal protein bL9 family.

Binds to the 23S rRNA. The polypeptide is Large ribosomal subunit protein bL9 (Moorella thermoacetica (strain ATCC 39073 / JCM 9320)).